Reading from the N-terminus, the 120-residue chain is Small ribosomal subunit protein uS13 (120 aa).

Residues His92–Lys120 are disordered. Residues Ala107–Lys120 are compositionally biased toward basic residues.

It belongs to the universal ribosomal protein uS13 family. As to quaternary structure, part of the 30S ribosomal subunit. Forms a loose heterodimer with protein S19. Forms two bridges to the 50S subunit in the 70S ribosome.

Located at the top of the head of the 30S subunit, it contacts several helices of the 16S rRNA. In the 70S ribosome it contacts the 23S rRNA (bridge B1a) and protein L5 of the 50S subunit (bridge B1b), connecting the 2 subunits; these bridges are implicated in subunit movement. Contacts the tRNAs in the A and P-sites. The chain is Small ribosomal subunit protein uS13 from Helicobacter pylori (strain J99 / ATCC 700824) (Campylobacter pylori J99).